A 243-amino-acid chain; its full sequence is Alanyl-tRNA editing protein AlaX-M (243 aa).

Zn(2+) is bound by residues H105, H109, C208, and H212.

Belongs to the class-II aminoacyl-tRNA synthetase family. Editing domain AlaX-M subfamily. The cofactor is Zn(2+).

The protein localises to the cytoplasm. Its function is as follows. Functions in trans to edit the amino acid moiety from incorrectly charged Ser-tRNA(Ala) or Gly-tRNA(Ala). Has no activity on incorrectly charged Ser-tRNA(Thr), nor on correctly charged Ala-tRNA(Ala) or Ser-tRNA(Ser). This Methanosarcina barkeri (strain Fusaro / DSM 804) protein is Alanyl-tRNA editing protein AlaX-M (alaXM).